Here is a 409-residue protein sequence, read N- to C-terminus: MALRPEDPSSGFRHSNVVAFINEKMARHTKGPEFYLENISLSWEKVEDKLRAILEDSEVPSEVKEACTWGSLALGVRFAHRQAQLQRHRVRWLHGFAKLHKSAAQALASDLKKLREQQETERKEAASRLRMAQTSLVEVQKERDKELVSPHEWEQGAGWPGLATAGGVCTEGAAEEEEEAAVAAAGAAGGKGAEEEQRDVEVVAAPVEAMAPPVEAGAAPMETQFPHVEARAASMETTEKLERILLQLLGDADQEKYTYWGQKEGDLRSVETATSYFSGTTNPWSRASSEPLPVQLPASYSYSYSSPFSSFSDIPTISPPQATVTAPVPPQLPSDWEAFDTSLWSDGGPHRIDHQEHPRDRRYSEPHQQRPPVYRRPGDWDCPWCNAVNFSRRDTCFDCGKGIWLQKPH.

Residues 92-408 are required for repression of transcription; that stretch reads WLHGFAKLHK…CGKGIWLQKP (317 aa). The interval 347-374 is disordered; sequence GGPHRIDHQEHPRDRRYSEPHQQRPPVY. Residues 348–368 show a composition bias toward basic and acidic residues; the sequence is GPHRIDHQEHPRDRRYSEPHQ. The RanBP2-type zinc-finger motif lies at 376 to 400; that stretch reads RPGDWDCPWCNAVNFSRRDTCFDCG. Residues cysteine 382, cysteine 385, cysteine 396, and cysteine 399 each contribute to the Zn(2+) site.

This sequence belongs to the TEX13 family. Interacts with CNOT1; the interaction may inhibit CNOT1 binding to mRNA and subsequently CNOT1-mediated mRNA degradation. Testis specific.

In terms of biological role, binds to ssRNA containing the consensus sequence 5'-AGGUAA-3'. Plays a role in transcriptional repression. Required for rapid sperm motility and timely degradation of mRNA via its interaction with CNOT1. This chain is Testis-expressed protein 13A, found in Homo sapiens (Human).